Consider the following 85-residue polypeptide: Large ribosomal subunit protein bL31B (85 aa).

The protein belongs to the bacterial ribosomal protein bL31 family. Type B subfamily. Part of the 50S ribosomal subunit.

The protein is Large ribosomal subunit protein bL31B of Clavibacter sepedonicus (Clavibacter michiganensis subsp. sepedonicus).